A 734-amino-acid polypeptide reads, in one-letter code: Photosystem I P700 chlorophyll a apoprotein A2 (734 aa).

Helical transmembrane passes span 46-69, 135-158, 175-199, 273-291, 330-353, 369-395, 417-439, and 517-535; these read IFAS…FHVA, LYTG…LHLQ, LNHH…HVAI, IAHH…GHMY, LHFQ…QHMY, AALY…IFFI, AIIS…LYVH, and FLVH…LILV. 2 residues coordinate [4Fe-4S] cluster: Cys559 and Cys568. 2 consecutive transmembrane segments (helical) span residues 575-596 and 643-665; these read AFYL…YWHW and LSVW…MFLI. Chlorophyll a is bound by residues His654, Met662, and Tyr670. Trp671 is a binding site for phylloquinone. Residues 707 to 727 form a helical membrane-spanning segment; that stretch reads LVGLAHFSVGYIFTYAAFLIA.

Belongs to the PsaA/PsaB family. The PsaA/B heterodimer binds the P700 chlorophyll special pair and subsequent electron acceptors. PSI consists of a core antenna complex that captures photons, and an electron transfer chain that converts photonic excitation into a charge separation. The eukaryotic PSI reaction center is composed of at least 11 subunits. P700 is a chlorophyll a/chlorophyll a' dimer, A0 is one or more chlorophyll a, A1 is one or both phylloquinones and FX is a shared 4Fe-4S iron-sulfur center. serves as cofactor.

The protein resides in the plastid. The protein localises to the chloroplast thylakoid membrane. It catalyses the reaction reduced [plastocyanin] + hnu + oxidized [2Fe-2S]-[ferredoxin] = oxidized [plastocyanin] + reduced [2Fe-2S]-[ferredoxin]. Functionally, psaA and PsaB bind P700, the primary electron donor of photosystem I (PSI), as well as the electron acceptors A0, A1 and FX. PSI is a plastocyanin-ferredoxin oxidoreductase, converting photonic excitation into a charge separation, which transfers an electron from the donor P700 chlorophyll pair to the spectroscopically characterized acceptors A0, A1, FX, FA and FB in turn. Oxidized P700 is reduced on the lumenal side of the thylakoid membrane by plastocyanin. This Psilotum nudum (Whisk fern) protein is Photosystem I P700 chlorophyll a apoprotein A2.